A 285-amino-acid polypeptide reads, in one-letter code: Nucleotide-binding protein Glov_2163 (285 aa).

8–15 contributes to the ATP binding site; the sequence is GMSGSGKS. 59-62 serves as a coordination point for GTP; that stretch reads DIRG.

It belongs to the RapZ-like family.

In terms of biological role, displays ATPase and GTPase activities. This Trichlorobacter lovleyi (strain ATCC BAA-1151 / DSM 17278 / SZ) (Geobacter lovleyi) protein is Nucleotide-binding protein Glov_2163.